Consider the following 293-residue polypeptide: ELMO domain-containing protein 2 (293 aa).

The 157-residue stretch at 126–282 (QHEELLMKLW…KFHEKIKGLL (157 aa)) folds into the ELMO domain.

In terms of tissue distribution, alveolar cells (morphologically type II cells) and alveolar macrophages (at protein level). Expressed in brain, colon, heart, kidney, liver, lung, muscle, placenta, small intestine, spleen, stomach and testis. In lung it is expressed in alveolar macrophages and alveolar walls.

Functionally, acts as a GTPase-activating protein (GAP) toward guanine nucleotide exchange factors like ARL2, ARL3, ARF1 and ARF6, but not for GTPases outside the Arf family. Regulates IFN-related antiviral responses. This Homo sapiens (Human) protein is ELMO domain-containing protein 2 (ELMOD2).